The sequence spans 396 residues: Squamosa promoter-binding-like protein 10 (396 aa).

Positions 74–104 (QSTSINSSSPEDKRCNLASQSSPGDSSSNID) are disordered. Polar residues predominate over residues 90–104 (LASQSSPGDSSSNID). The segment at 173-250 (VPRCQIDGCE…SHHNARRRKP (78 aa)) adopts an SBP-type zinc-finger fold. Zn(2+)-binding residues include Cys-176, Cys-181, Cys-198, His-201, Cys-217, Cys-220, His-224, and Cys-236. A Bipartite nuclear localization signal motif is present at residues 233 to 249 (KRSCRKRLSHHNARRRK).

Requires Zn(2+) as cofactor.

The protein resides in the nucleus. Functionally, trans-acting factor that binds specifically to the consensus nucleotide sequence 5'-TNCGTACAA-3'. This is Squamosa promoter-binding-like protein 10 (SPL10) from Arabidopsis thaliana (Mouse-ear cress).